The following is a 193-amino-acid chain: uncharacterized protein (193 aa).

The next 4 helical transmembrane spans lie at 40 to 56, 63 to 79, 86 to 110, and 117 to 138; these read LYIA…LKLI, AAGL…SSLC, CSGY…IVSC, and FIFP…FQIY. A disordered region spans residues 158-193; that stretch reads TTTKLSRSSSAPDLSCPSLSTQPTSPNQSLSAYKKY.

The protein belongs to the chlamydial CPn_0442/CT_006/TC_0274 family.

It localises to the cell membrane. This is an uncharacterized protein from Chlamydia muridarum (strain MoPn / Nigg).